A 30-amino-acid chain; its full sequence is Pyrrole-2-carboxylate oxygenase (30 aa).

Homotrimer. The cofactor is FAD.

The catalysed reaction is pyrrole-2-carboxylate + NADH + O2 + H(+) = 5-hydroxypyrrole-2-carboxylate + NAD(+) + H2O. Its function is as follows. Monooxygenase that initiates the degradation of pyrrole-2-carboxylate, which allows Arthrobacter sp. strain Py1 to grow on pyrrole-2-carboxylate as sole carbon, nitrogen, and energy source. To a lesser extent, can also use pyrrole, pyrrole-2-aldehyde, and indole-2-carboxylate as substrate. This Arthrobacter sp. (strain Py1) protein is Pyrrole-2-carboxylate oxygenase.